The following is a 1259-amino-acid chain: MDEQSSGQDVDQSLDTLLKEIDLKMQLRDGEEGRRASAQSEGSLRLPAVRMLERGMVASASHKSVTFDEEPPSVHEYSVVMDSSAGTSECAEEEREGADGYECAADTMRVLYDEDTDSSCMGSERALAGPAAEGIVPEGYKEADLLGTERAGSGTPSLSYDDAAGLGSPPHVIFTIKPTSPLNAYDRGSWEPLQSNTAMDTPPRGGTAVSQHGLFAKAPKLPAIPSPNSRRRVSYAGSDSYPSDDSATDKRSLTDKTVPDNRGENERGGFGYENSDRNPSIETGTTDEYQSAGEYKSMSSSEANDDSKTEASVEDLRISNKPQRDTTIQDLHATTLPRSSSTLIPPALPPLDPSFFGRLARSPSYSPIRDRGSSEGSVGEHDSSLEQDHELGMGQQSARTNSSASGNSSDSVMVKPLSLFSNSQVDSLHLGAPAPDNSTPNKEALPSACPPDAMKSIGTQTSILEDKAESGPSQSSATSEKSVMLPNFPRFESFFDDSYPFGHDSDRSNNSVSYSKRTLKPSNYLSIWHLQEAQMRHDSPAFSANSQFSCKMVGESKRTSLESSRLSAKYESRFKFKFKPKLVSRRRIYYNKDQWRNFQEPPTRYYSNCTESDHISSDVPGTPVSPSIKSRNLCHGRTRGNMKMVERVNSLCSANERLSSAGNGDETFLSASSNLDVTSRRPSVDIISEISTKDLLPKIKQDSDGFNELIKTFVDHDEQSQQTDSTIASYRRGTRDTTIYHIWEHSIQENSISDYGNSPTAGKGTISKLLDNHEVEFDGKNSFVTGLGIIKKTDQDSRVDVLRIDSTQGIEAIQSFSPYSYRNAFDPVTPTKSAYHGCEALQASQMGTPFRPAISTTLQAQSGLGHKRPAVERPTTAQLGNYVSAEMSPEVQEPAEETKKRTDLQDNGQLYFVFVGIEQLALRDIERHSAECSIEFDNGNNVVQSEWLPLPKSGSMSLNQEYSVIIAEESLPNMIITLKCRYKSPKKELVEITEKVPLKSKCCGLGKPKYKQVKKLLRREMDFDEWDYKIAQDGSFARCKEQIDEELLKNVRYKKQQFRWTLLSEWERDHSKEHKRKRAWELPRLPAHPAGALVVDMCYLPRTSRFEKFPKTLQIARRVVNKFKEQKAIAMEGFMWQEGGDTEVLKRRYFTLNGTQLVAHHEITKKPKAMINLLRVEKLLTEAEISREMLSSSSRCFTDLVLLHECFVLFFENGEEIMFNPDTKTEKLEWIEKLRKVIELNRFHQPWVKKFLNSSENIL.

3 disordered regions span residues 185–416, 428–455, and 862–902; these read YDRG…MVKP, LHLG…DAMK, and SGLG…KKRT. Basic and acidic residues predominate over residues 247 to 267; that stretch reads ATDKRSLTDKTVPDNRGENER. The segment covering 277 to 289 has biased composition (polar residues); the sequence is RNPSIETGTTDEY. 2 stretches are compositionally biased toward basic and acidic residues: residues 305–324 and 368–391; these read DDSK…KPQR and IRDR…DHEL. A compositionally biased stretch (low complexity) spans 397–411; it reads SARTNSSASGNSSDS. The PH domain occupies 1128-1239; the sequence is AIAMEGFMWQ…WIEKLRKVIE (112 aa).

Belongs to the BUD4 family.

The protein localises to the cell septum. In terms of biological role, may be involved in the septin organization at the site of septation. This Eremothecium gossypii (strain ATCC 10895 / CBS 109.51 / FGSC 9923 / NRRL Y-1056) (Yeast) protein is Bud site selection protein 4 homolog (BUD4).